Reading from the N-terminus, the 114-residue chain is Large ribosomal subunit protein uL18 (114 aa).

This sequence belongs to the universal ribosomal protein uL18 family. As to quaternary structure, part of the 50S ribosomal subunit; part of the 5S rRNA/L5/L18/L25 subcomplex. Contacts the 5S and 23S rRNAs.

In terms of biological role, this is one of the proteins that bind and probably mediate the attachment of the 5S RNA into the large ribosomal subunit, where it forms part of the central protuberance. The chain is Large ribosomal subunit protein uL18 from Bacteroides fragilis (strain ATCC 25285 / DSM 2151 / CCUG 4856 / JCM 11019 / LMG 10263 / NCTC 9343 / Onslow / VPI 2553 / EN-2).